The sequence spans 124 residues: Small ribosomal subunit protein uS12 (124 aa).

3-methylthioaspartic acid is present on Asp89. The tract at residues 104–124 (ALGVEDRKRGRSKYGAKRPKA) is disordered. A compositionally biased stretch (basic residues) spans 112–124 (RGRSKYGAKRPKA).

It belongs to the universal ribosomal protein uS12 family. Part of the 30S ribosomal subunit. Contacts proteins S8 and S17. May interact with IF1 in the 30S initiation complex.

In terms of biological role, with S4 and S5 plays an important role in translational accuracy. Interacts with and stabilizes bases of the 16S rRNA that are involved in tRNA selection in the A site and with the mRNA backbone. Located at the interface of the 30S and 50S subunits, it traverses the body of the 30S subunit contacting proteins on the other side and probably holding the rRNA structure together. The combined cluster of proteins S8, S12 and S17 appears to hold together the shoulder and platform of the 30S subunit. This chain is Small ribosomal subunit protein uS12, found in Treponema denticola (strain ATCC 35405 / DSM 14222 / CIP 103919 / JCM 8153 / KCTC 15104).